A 209-amino-acid polypeptide reads, in one-letter code: COP9 signalosome complex subunit 8 (209 aa).

Residues 8–179 (DNAFSFRKLL…GALDVSLNRF (172 aa)) form the PCI domain. Ser-175 bears the Phosphoserine mark.

The protein belongs to the CSN8 family. As to quaternary structure, component of the CSN complex, composed of COPS1/GPS1, COPS2, COPS3, COPS4, COPS5, COPS6, COPS7 (COPS7A or COPS7B), COPS8 and COPS9. In the complex, it probably interacts directly with COPS3, COPS4 and COPS7 (COPS7A or COPS7B).

It is found in the cytoplasm. Its subcellular location is the nucleus. In terms of biological role, component of the COP9 signalosome complex (CSN), a complex involved in various cellular and developmental processes. The CSN complex is an essential regulator of the ubiquitin (Ubl) conjugation pathway by mediating the deneddylation of the cullin subunits of SCF-type E3 ligase complexes, leading to decrease the Ubl ligase activity of SCF-type complexes such as SCF, CSA or DDB2. The complex is also involved in phosphorylation of p53/TP53, c-jun/JUN, IkappaBalpha/NFKBIA, ITPK1 and IRF8/ICSBP, possibly via its association with CK2 and PKD kinases. CSN-dependent phosphorylation of TP53 and JUN promotes and protects degradation by the Ubl system, respectively. This is COP9 signalosome complex subunit 8 (Cops8) from Rattus norvegicus (Rat).